The sequence spans 238 residues: Probable transcriptional regulatory protein HH_1604 (238 aa).

This sequence belongs to the TACO1 family.

Its subcellular location is the cytoplasm. In Helicobacter hepaticus (strain ATCC 51449 / 3B1), this protein is Probable transcriptional regulatory protein HH_1604.